Consider the following 30-residue polypeptide: Trypsin inhibitor 1 (30 aa).

Intrachain disulfides connect C4–C21, C11–C23, and C17–C29.

This sequence belongs to the protease inhibitor I7 (squash-type serine protease inhibitor) family.

The protein resides in the secreted. Functionally, inhibits trypsin. The chain is Trypsin inhibitor 1 from Citrullus lanatus (Watermelon).